The chain runs to 255 residues: Triosephosphate isomerase (255 aa).

Substrate is bound at residue 9-11 (NWK). Residue H95 is the Electrophile of the active site. E167 (proton acceptor) is an active-site residue. Substrate-binding positions include G173, S212, and 233–234 (GG).

It belongs to the triosephosphate isomerase family. In terms of assembly, homodimer.

The protein localises to the cytoplasm. It carries out the reaction D-glyceraldehyde 3-phosphate = dihydroxyacetone phosphate. The protein operates within carbohydrate biosynthesis; gluconeogenesis. It functions in the pathway carbohydrate degradation; glycolysis; D-glyceraldehyde 3-phosphate from glycerone phosphate: step 1/1. Involved in the gluconeogenesis. Catalyzes stereospecifically the conversion of dihydroxyacetone phosphate (DHAP) to D-glyceraldehyde-3-phosphate (G3P). The sequence is that of Triosephosphate isomerase from Pectobacterium atrosepticum (strain SCRI 1043 / ATCC BAA-672) (Erwinia carotovora subsp. atroseptica).